Reading from the N-terminus, the 75-residue chain is Alpha-elapitoxin-Bc2a (75 aa).

Positions 1-2 (YT) are cleaved as a signal peptide. 5 disulfides stabilise this stretch: Cys-5/Cys-24, Cys-17/Cys-45, Cys-30/Cys-34, Cys-49/Cys-60, and Cys-61/Cys-66.

This sequence belongs to the three-finger toxin family. Long-chain subfamily. Type II alpha-neurotoxin sub-subfamily. In terms of assembly, monomer in solution, homodimer in crystal state. Expressed by the venom gland.

It localises to the secreted. In terms of biological role, binds to muscular and neuronal nicotinic acetylcholine receptor (nAChR) and inhibits acetylcholine from binding to the receptor, thereby impairing neuromuscular and neuronal transmission. Reversibly blocks chick and mouse muscle nicotinic acetylcholine receptors. Blocks muscle type nAChR with an IC(50)=30 nM, when heterologously expressed in oocytes. Also binds with high affinity to alpha-7/CHRNA7 nAChRs. In addition, shows a weak inhibition of neuronal alpha-3-beta-2/CHRNA3-CHRNB2 nAChR (IC(50)=2.9 uM). Selectively binds to alpha-1-delta subunit interface of the mouse muscle nicotinic acetylcholine receptor, with a 10-fold higher affinity for the adult than for the fetal receptors. In vivo, when intraperitoneally injected into mice, causes flaccid paralysis and respiratory distress, followed by death within 2-4 hours. The chain is Alpha-elapitoxin-Bc2a from Bungarus candidus (Malayan krait).